Reading from the N-terminus, the 410-residue chain is uncharacterized protein (410 aa).

H87 is a binding site for Zn(2+). The active site involves D89. D120 serves as a coordination point for Zn(2+). The active-site Proton acceptor is E154. Zn(2+) is bound by residues E155, D184, and H387.

Belongs to the peptidase M20A family. The cofactor is Zn(2+). Co(2+) serves as cofactor.

This is an uncharacterized protein from Methanocaldococcus jannaschii (strain ATCC 43067 / DSM 2661 / JAL-1 / JCM 10045 / NBRC 100440) (Methanococcus jannaschii).